The following is a 268-amino-acid chain: Fatty acid elongase sre1 (268 aa).

7 helical membrane-spanning segments follow: residues 31–51 (VFPF…QAIM), 62–82 (FSII…SGVM), 110–130 (IGFW…DTVI), 137–157 (PIIF…WQWL), 161–181 (WLVG…LMYY), 198–218 (ITKA…YWFV), and 227–247 (APLS…ILFG).

This sequence belongs to the ELO family.

The protein localises to the membrane. The enzyme catalyses a very-long-chain acyl-CoA + malonyl-CoA + H(+) = a very-long-chain 3-oxoacyl-CoA + CO2 + CoA. Could be implicated in synthesis of very long chain fatty acids. The sequence is that of Fatty acid elongase sre1 (sre1) from Dictyostelium discoideum (Social amoeba).